A 347-amino-acid chain; its full sequence is GMP reductase (347 aa).

Residue aspartate 108–alanine 131 participates in NADP(+) binding. K(+)-binding residues include glycine 181 and glycine 183. The active-site Thioimidate intermediate is the cysteine 186. Position 216 to 239 (isoleucine 216 to valine 239) interacts with NADP(+).

It belongs to the IMPDH/GMPR family. GuaC type 1 subfamily. As to quaternary structure, homotetramer.

It catalyses the reaction IMP + NH4(+) + NADP(+) = GMP + NADPH + 2 H(+). Its function is as follows. Catalyzes the irreversible NADPH-dependent deamination of GMP to IMP. It functions in the conversion of nucleobase, nucleoside and nucleotide derivatives of G to A nucleotides, and in maintaining the intracellular balance of A and G nucleotides. This chain is GMP reductase, found in Aeromonas salmonicida (strain A449).